We begin with the raw amino-acid sequence, 343 residues long: Squamosa promoter-binding-like protein 11 (343 aa).

The segment at Met1–Gly48 is disordered. Low complexity-rich tracts occupy residues Ser7–Asp19 and Asp37–Gly48. The SBP-type zinc finger occupies Ala64 to Pro141. Positions 67, 72, 89, 92, 108, 111, 115, and 127 each coordinate Zn(2+). The short motif at Lys124–Lys140 is the Bipartite nuclear localization signal element.

In terms of tissue distribution, expressed in stems, leaf sheaths, and young panicles.

Its subcellular location is the nucleus. Functionally, trans-acting factor that binds specifically to the consensus nucleotide sequence 5'-TNCGTACAA-3'. May be involved in panicle development. The polypeptide is Squamosa promoter-binding-like protein 11 (SPL11) (Oryza sativa subsp. japonica (Rice)).